The chain runs to 174 residues: ATP-dependent protease subunit HslV (174 aa).

Threonine 2 is a catalytic residue. Residues glycine 157, cysteine 160, and threonine 163 each contribute to the Na(+) site.

It belongs to the peptidase T1B family. HslV subfamily. As to quaternary structure, a double ring-shaped homohexamer of HslV is capped on each side by a ring-shaped HslU homohexamer. The assembly of the HslU/HslV complex is dependent on binding of ATP.

The protein localises to the cytoplasm. It catalyses the reaction ATP-dependent cleavage of peptide bonds with broad specificity.. Allosterically activated by HslU binding. Functionally, protease subunit of a proteasome-like degradation complex believed to be a general protein degrading machinery. The sequence is that of ATP-dependent protease subunit HslV from Shewanella pealeana (strain ATCC 700345 / ANG-SQ1).